Here is a 492-residue protein sequence, read N- to C-terminus: Glycogen synthase 1 (492 aa).

ADP-alpha-D-glucose is bound at residue K15.

It belongs to the glycosyltransferase 1 family. Bacterial/plant glycogen synthase subfamily.

The catalysed reaction is [(1-&gt;4)-alpha-D-glucosyl](n) + ADP-alpha-D-glucose = [(1-&gt;4)-alpha-D-glucosyl](n+1) + ADP + H(+). Its pathway is glycan biosynthesis; glycogen biosynthesis. Functionally, synthesizes alpha-1,4-glucan chains using ADP-glucose. The protein is Glycogen synthase 1 of Trichormus variabilis (strain ATCC 29413 / PCC 7937) (Anabaena variabilis).